A 143-amino-acid chain; its full sequence is Large ribosomal subunit protein uL11 (143 aa).

This sequence belongs to the universal ribosomal protein uL11 family. As to quaternary structure, part of the ribosomal stalk of the 50S ribosomal subunit. Interacts with L10 and the large rRNA to form the base of the stalk. L10 forms an elongated spine to which 2 L12 dimers bind in a sequential fashion forming a pentameric L10(L12)2(L12)2 complex. One or more lysine residues are methylated.

Its function is as follows. Forms part of the ribosomal stalk which helps the ribosome interact with GTP-bound translation factors. In Agrobacterium fabrum (strain C58 / ATCC 33970) (Agrobacterium tumefaciens (strain C58)), this protein is Large ribosomal subunit protein uL11.